A 403-amino-acid polypeptide reads, in one-letter code: Tyrosine--tRNA ligase (403 aa).

A 'HIGH' region motif is present at residues 45 to 54; the sequence is PTAPDLHLGH. The short motif at 229–233 is the 'KMSKS' region element; sequence KMSKS. Position 232 (Lys232) interacts with ATP. The S4 RNA-binding domain maps to 341 to 402; the sequence is VALCRLLAEA…GKRRFARITF (62 aa).

This sequence belongs to the class-I aminoacyl-tRNA synthetase family. TyrS type 2 subfamily. As to quaternary structure, homodimer.

Its subcellular location is the cytoplasm. It carries out the reaction tRNA(Tyr) + L-tyrosine + ATP = L-tyrosyl-tRNA(Tyr) + AMP + diphosphate + H(+). Functionally, catalyzes the attachment of tyrosine to tRNA(Tyr) in a two-step reaction: tyrosine is first activated by ATP to form Tyr-AMP and then transferred to the acceptor end of tRNA(Tyr). This chain is Tyrosine--tRNA ligase, found in Geobacter sulfurreducens (strain ATCC 51573 / DSM 12127 / PCA).